The sequence spans 80 residues: MLPLAKNALSRLQVRSIQQVVARQSHQKRAPSFHDKYGNAILAGGAIFCVSTWTYTATQIGIEWNMSPVGRVTPKEWRDQ.

The transit peptide at 1-24 (MLPLAKNALSRLQVRSIQQVVARQ) directs the protein to the mitochondrion. At 25–39 (SHQKRAPSFHDKYGN) the chain is on the mitochondrial matrix side. The chain crosses the membrane as a helical span at residues 40–60 (AILAGGAIFCVSTWTYTATQI). At 61-80 (GIEWNMSPVGRVTPKEWRDQ) the chain is on the mitochondrial intermembrane side.

It belongs to the cytochrome c oxidase VIIb family. In terms of assembly, component of the cytochrome c oxidase (complex IV, CIV), a multisubunit enzyme composed of 14 subunits. The complex is composed of a catalytic core of 3 subunits MT-CO1, MT-CO2 and MT-CO3, encoded in the mitochondrial DNA, and 11 supernumerary subunits COX4I, COX5A, COX5B, COX6A, COX6B, COX6C, COX7A, COX7B, COX7C, COX8 and NDUFA4, which are encoded in the nuclear genome. The complex exists as a monomer or a dimer and forms supercomplexes (SCs) in the inner mitochondrial membrane with NADH-ubiquinone oxidoreductase (complex I, CI) and ubiquinol-cytochrome c oxidoreductase (cytochrome b-c1 complex, complex III, CIII), resulting in different assemblies (supercomplex SCI(1)III(2)IV(1) and megacomplex MCI(2)III(2)IV(2)).

It is found in the mitochondrion inner membrane. It participates in energy metabolism; oxidative phosphorylation. In terms of biological role, component of the cytochrome c oxidase, the last enzyme in the mitochondrial electron transport chain which drives oxidative phosphorylation. The respiratory chain contains 3 multisubunit complexes succinate dehydrogenase (complex II, CII), ubiquinol-cytochrome c oxidoreductase (cytochrome b-c1 complex, complex III, CIII) and cytochrome c oxidase (complex IV, CIV), that cooperate to transfer electrons derived from NADH and succinate to molecular oxygen, creating an electrochemical gradient over the inner membrane that drives transmembrane transport and the ATP synthase. Cytochrome c oxidase is the component of the respiratory chain that catalyzes the reduction of oxygen to water. Electrons originating from reduced cytochrome c in the intermembrane space (IMS) are transferred via the dinuclear copper A center (CU(A)) of subunit 2 and heme A of subunit 1 to the active site in subunit 1, a binuclear center (BNC) formed by heme A3 and copper B (CU(B)). The BNC reduces molecular oxygen to 2 water molecules using 4 electrons from cytochrome c in the IMS and 4 protons from the mitochondrial matrix. Plays a role in proper central nervous system (CNS) development in vertebrates. This chain is Cytochrome c oxidase subunit 7B, mitochondrial (Cox7b), found in Mus musculus (Mouse).